Consider the following 770-residue polypeptide: U3 small nucleolar RNA-associated protein 14 homolog A (770 aa).

Over residues 1 to 17 the composition is skewed to polar residues; sequence MNANQAAESNLLASNQQ. The segment at 1-65 is disordered; sequence MNANQAAESN…GKDRQKLADR (65 aa). A phosphoserine mark is found at S30, S32, and S53. Residues 41-68 adopt a coiled-coil conformation; that stretch reads ERKHQKLLESISSLNGKDRQKLADRSEA. Residues 56 to 65 are compositionally biased toward basic and acidic residues; that stretch reads GKDRQKLADR. A phosphoserine mark is found at S78 and S82. Residue T206 is modified to Phosphothreonine. 2 coiled-coil regions span residues 217-291 and 318-348; these read SLEE…DKAR and LEAR…EEEG. Disordered stretches follow at residues 334–361, 392–455, and 467–505; these read LTQK…LVPD, KDLE…SSQE, and LRTE…RPER. 2 stretches are compositionally biased toward acidic residues: residues 343–358 and 396–410; these read ESEE…EEPL and DPAE…ESEE. 2 positions are modified to phosphoserine: S406 and S408. Positions 411 to 444 are enriched in basic and acidic residues; the sequence is EKAVVEEETLLKEFEERRSLRQKSELNHMAEPVH. A Glycyl lysine isopeptide (Lys-Gly) (interchain with G-Cter in SUMO2) cross-link involves residue K449. S453 bears the Phosphoserine mark. The residue at position 567 (S567) is a Phosphoserine. At R588 the chain carries Citrulline. Residue K732 forms a Glycyl lysine isopeptide (Lys-Gly) (interchain with G-Cter in SUMO2) linkage.

The protein belongs to the UTP14 family. In terms of assembly, interacts with DHX37. Citrullinated by PADI4.

It is found in the nucleus. The protein localises to the nucleolus. Its function is as follows. May be required for ribosome biogenesis. This is U3 small nucleolar RNA-associated protein 14 homolog A (UTP14A) from Bos taurus (Bovine).